A 156-amino-acid polypeptide reads, in one-letter code: Xanthocillin biosynthesis cluster protein D (156 aa).

Residues Asn107 and Asn120 are each glycosylated (N-linked (GlcNAc...) asparagine). A helical membrane pass occupies residues 131-153 (IHLNAIALVATVWYGFTLSSSLL).

The protein localises to the membrane. It functions in the pathway secondary metabolite biosynthesis. Its function is as follows. Part of the gene cluster that mediates the biosynthesis of the isocyanide xanthocillin and its derivatives. The first step of the pathway consists in the conversion of tyrosine into a vinyl-isonitrile intermediate by the isocyanide synthase xanB. Subsequent oxidative dimerization of this intermediate to form xanthocillin may involve the cytochrome P450 monooxygenase xanG, whose expression is coregulated with that of XanB. Xanthocillin can be further modified by the isonitrile hydratase-like protein xanA which introduces N-formyl groups and the methyltransferase xanE which introduces methyl groups, leading to the production of several derivatives including fumiformamide. Finally, fumiformamide can be subject to both oxidative and reductive cyclization to yield melanocins E and F, respectively. The polypeptide is Xanthocillin biosynthesis cluster protein D (Aspergillus fumigatus (strain ATCC MYA-4609 / CBS 101355 / FGSC A1100 / Af293) (Neosartorya fumigata)).